We begin with the raw amino-acid sequence, 763 residues long: High glucose sensor RGT2 (763 aa).

Residues 1 to 28 (MNDSQNCLRQREENSHLNPGNDFGHHQG) are disordered. Residues 1–99 (MNDSQNCLRQ…PLPLRSNVMS (99 aa)) are Cytoplasmic-facing. Residues 100–120 (VLVGIFVAVGGFLFGYDTGLI) form a helical membrane-spanning segment. The Extracellular segment spans residues 121 to 144 (NSITDMPYVKTYIAPNHSYFTTSQ). N-linked (GlcNAc...) asparagine glycosylation is present at asparagine 136. The helical transmembrane segment at 145-165 (IAILVSFLSLGTFFGALIAPY) threads the bilayer. The Cytoplasmic segment spans residues 166–175 (ISDSYGRKPT). The helical transmembrane segment at 176–196 (IMFSTAVIFSIGNSLQVASGG) threads the bilayer. Residue leucine 197 is a topological domain, extracellular. A helical membrane pass occupies residues 198 to 218 (VLLIVGRVISGIGIGIISAVV). Over 219 to 231 (PLYQAEAAQKNLR) the chain is Cytoplasmic. The helical transmembrane segment at 232–252 (GAIISSYQWAITIGLLVSSAV) threads the bilayer. Over 253-266 (SQGTHSKNGPSSYR) the chain is Extracellular. The chain crosses the membrane as a helical span at residues 267–287 (IPIGLQYVWSSILAVGMIFLP). At 288-357 (ESPRYYVLKD…SENRPKQILR (70 aa)) the chain is on the cytoplasmic side. Residues 358-378 (IFTGIAIQAFQQASGINFIFY) form a helical membrane-spanning segment. The Extracellular segment spans residues 379–393 (YGVNFFNNTGVDNSY). N-linked (GlcNAc...) asparagine glycosylation occurs at asparagine 385. Residues 394–414 (LVSFISYAVNVAFSIPGMYLV) form a helical membrane-spanning segment. At 415–421 (DRIGRRP) the chain is on the cytoplasmic side. The helical transmembrane segment at 422–442 (VLLAGGVIMAIANLVIAIVGV) threads the bilayer. Residues 443 to 452 (SEGKTVVASK) are Extracellular-facing. The helical transmembrane segment at 453–473 (IMIAFICLFIAAFSATWGGVV) threads the bilayer. Over 474–491 (WVVSAELYPLGVRSKCTA) the chain is Cytoplasmic. The helical transmembrane segment at 492-512 (ICAAANWLVNFTCALITPYIV) threads the bilayer. Over 513–524 (DVGSHTSSMGPK) the chain is Extracellular. A helical transmembrane segment spans residues 525–545 (IFFIWGGLNVVAVIVVYFAVY). Topologically, residues 546-763 (ETRGLTLEEI…SKHSQYTSPQ (218 aa)) are cytoplasmic. The segment covering 725–737 (SSTTSNDTSFSPS) has biased composition (low complexity). The disordered stretch occupies residues 725 to 763 (SSTTSNDTSFSPSHNSNARTSSNWTSDLASKHSQYTSPQ). Residues 738-763 (HNSNARTSSNWTSDLASKHSQYTSPQ) are compositionally biased toward polar residues.

It belongs to the major facilitator superfamily. Sugar transporter (TC 2.A.1.1) family. As to quaternary structure, interacts with YCK1. Interacts with MTH1 and STD1. In terms of processing, phosphorylated in the C-terminal tail on Yck consensus sites in a yeast casein kinases YCK1 and YCK2 (Yck)-dependent manner. This phosphorylation is required for interaction with HXT corepressors MTH1 and STD1 and ultimately HXT expression.

The protein localises to the cell membrane. Low-affinity high glucose sensor that is part of the sensor/receptor-repressor (SSR) glucose-signaling pathway, which detects extracellular glucose and induces expression of glucose transporters that bring glucose into the cell. The transporter-like sensor generates an intracellular signal in the presence of high levels of glucose to promote high glucose-induced expression of HXT1. Binding of glucose to the RGT2 transmembrane domain activates a downstream signaling cascade, leading to phosphorylation of the RGT1 corepressors MTH1 and STD1, targeting them for SCF(Grr1)-dependent ubiquitination and degradation. Depletion of the corepressors robs RGT1 of its ability to repress expression of HXT genes, leading to accumulation of glucose transporters in the plasma membrane. Even though RGT2 is similar to glucose transporters, it appears to be unable to transport glucose. The protein is High glucose sensor RGT2 of Saccharomyces cerevisiae (strain ATCC 204508 / S288c) (Baker's yeast).